Consider the following 364-residue polypeptide: Fructose-1,6-bisphosphatase class 1 1 (364 aa).

Residues E99, D121, L123, and D124 each contribute to the Mg(2+) site. Substrate contacts are provided by residues 124–127 and N220; that span reads DGSS. E292 lines the Mg(2+) pocket.

It belongs to the FBPase class 1 family. In terms of assembly, homotetramer. Requires Mg(2+) as cofactor.

It localises to the cytoplasm. The catalysed reaction is beta-D-fructose 1,6-bisphosphate + H2O = beta-D-fructose 6-phosphate + phosphate. It participates in carbohydrate biosynthesis; gluconeogenesis. The sequence is that of Fructose-1,6-bisphosphatase class 1 1 from Albidiferax ferrireducens (strain ATCC BAA-621 / DSM 15236 / T118) (Rhodoferax ferrireducens).